We begin with the raw amino-acid sequence, 1028 residues long: RNA cytidine acetyltransferase 2 (1028 aa).

ATP-binding positions include 286–295 (GRGKSAALGL) and Arg458. The N-acetyltransferase domain occupies 546-729 (VLLGPVDESQ…FAPFYVSQIP (184 aa)). Acetyl-CoA is bound by residues 617-619 (IAV), 624-630 (MKMGYGS), and Lys717. Residues 982 to 1028 (SGIISVKSTKSENENGFDKSTKKRSSDKRSSSSSKSKSSKKRKSLKE) are disordered. A compositionally biased stretch (basic and acidic residues) spans 990-1001 (TKSENENGFDKS). A compositionally biased stretch (basic residues) spans 1018–1028 (KSSKKRKSLKE).

Belongs to the RNA cytidine acetyltransferase family. NAT10 subfamily.

Its subcellular location is the nucleus. The protein resides in the nucleolus. The enzyme catalyses a cytidine in 18S rRNA + acetyl-CoA + ATP + H2O = an N(4)-acetylcytidine in 18S rRNA + ADP + phosphate + CoA + H(+). The catalysed reaction is a cytidine in tRNA + acetyl-CoA + ATP + H2O = an N(4)-acetylcytidine in tRNA + ADP + phosphate + CoA + H(+). Functionally, RNA cytidine acetyltransferase with specificity toward both 18S rRNA and tRNAs. Catalyzes the formation of N(4)-acetylcytidine (ac4C) in 18S rRNA. Required for early nucleolar cleavages of precursor rRNA at sites A0, A1 and A2 during 18S rRNA synthesis. Catalyzes the formation of ac4C in serine and leucine tRNAs. Requires a tRNA-binding adapter protein for full tRNA acetyltransferase activity but not for 18S rRNA acetylation. The chain is RNA cytidine acetyltransferase 2 from Arabidopsis thaliana (Mouse-ear cress).